Here is a 1307-residue protein sequence, read N- to C-terminus: MSSLPGCMSLAAAPAAADSAEIAELQQAVVEELGISMEELRQYIDEELEKMDCIQQRKKQLAELETWVLQKESEVAYVDRLFDDASREVTNCESLVKDFYSKLGLQYHDSSSEDEASRPTEIIEIPDEDDDVLSIDSGDAGSRTPKDQKLREAMAALRKSAQDVQKFMDAVNKKSSSQDLHKGTLGQVSGELSKDGDLIVSMRILGKKRTKTWHKGTLIAIQTVGLGKKYKVKFDNKGKSLLSGNHIAYDYHPPADKLFVGSRVVAKYKDGNQVWLYAGIVAETPNVKNKLRFLIFFDDGYASYVTQSELYPICRPLKKTWEDIEDSSCRDFIEEYITAYPNRPMVLLKSGQLIKTEWEGTWWKSRVEEVDGSLVRILFLDDKRCEWIYRGSTRLEPMFSMKTSSASAMEKKQGGQLRTRPNMGAVRSKGPVVQYTQDLTGTGIQFKPMEPLQPIAPPAPLPIPPLSPQAADTDLESQLAQSRKQVAKKSTSFRPGSVGSGHSSPTSSTLSENVSAGKLGINQTYRSPLASVTSTPASAAPPVPPVPPGPPTPPGPPAPPGPLAPPAFHGMLERAPAEPSYRAPMEKLFYLPHVCSYTCLSRIRPMRNEQYRGKNPLLVPLLYDFRRMTARRRVNRKMGFHVIYKTPCGLCLRTMQEIERYLFETGCDFLFLEMFCLDPYVLVDRKFQPFKPFYYILDITYGKEDVPLSCVNEIDTTPPPQVAYSKERIPGKGVFINTGPEFLVGCDCKDGCRDKSKCACHQLTIQATACTPGGQVNPNSGYQYKRLEECLPTGVYECNKRCNCDPNMCTNRLVQHGLQVRLQLFKTQNKGWGIRCLDDIAKGSFVCIYAGKILTDDFADKEGLEMGDEYFANLDHIESVENFKEGYESDVPTSSDSSGVDMKDQEDGNSGSEDPEESNDDSSDDNFCKDEDFSTSSVWRSYATRRQTRGQKENELSEMTSKDSRPPDLGPPHVPIPSSVSVGGCNPPSSEETPKNKVASWLSCNSVSEGGFADSDSRSSFKTSEGGDGRAGGGRGEAERASTSGLSFKDEGDNKQPKKEDPENRNKMPVVTEGSQNHGHNPPMKSEGLRRPASKMSVLQSQRVVTSTQSNPDDILTLSSSTESEGESGTSRKPTAGHTSATAVDSDDIQTISSGSDGDDFEDKKNLSGPTKRQVAVKSTRGFALKSTHGIAIKSTNMASVDKGESAPVRKNTRQFYDGEESCYIIDAKLEGNLGRYLNHSCSPNLFVQNVFVDTHDLRFPWVAFFASKRIRAGTELTWDYNYEVGSVEGKELLCCCGAIECRGRLL.

Residues 30 to 65 are a coiled coil; the sequence is VEELGISMEELRQYIDEELEKMDCIQQRKKQLAELE. Phosphoserine is present on residues S112 and S117. The residue at position 120 (T120) is a Phosphothreonine. Residues 127-148 form a disordered region; it reads DEDDDVLSIDSGDAGSRTPKDQ. K182 participates in a covalent cross-link: Glycyl lysine isopeptide (Lys-Gly) (interchain with G-Cter in SUMO2); alternate. K182 participates in a covalent cross-link: Glycyl lysine isopeptide (Lys-Gly) (interchain with G-Cter in ubiquitin); alternate. 2 consecutive Tudor domains span residues 257 to 320 and 347 to 403; these read KLFV…LKKT and LLKS…SMKT. Disordered stretches follow at residues 404–424, 444–512, and 531–570; these read SSASAMEKKQGGQLRTRPNMG, IQFK…TLSE, and SVTSTPASAAPPVPPVPPGPPTPPGPPAPPGPLAPPAFHG. The segment covering 454-467 has biased composition (pro residues); it reads PIAPPAPLPIPPLS. The span at 476-494 shows a compositional bias: polar residues; the sequence is ESQLAQSRKQVAKKSTSFR. Over residues 495 to 512 the composition is skewed to low complexity; sequence PGSVGSGHSSPTSSTLSE. Positions 539-565 are enriched in pro residues; sequence AAPPVPPVPPGPPTPPGPPAPPGPLAP. The region spanning 611–682 is the MBD domain; it reads YRGKNPLLVP…EMFCLDPYVL (72 aa). A Pre-SET domain is found at 744–817; the sequence is VGCDCKDGCR…MCTNRLVQHG (74 aa). Zn(2+) is bound by residues C746, C748, C752, C758, C760, C798, C802, C804, and C809. In terms of domain architecture, SET spans 820–1282; sequence VRLQLFKTQN…AGTELTWDYN (463 aa). S-adenosyl-L-methionine contacts are provided by residues 830-832, D868, and Y870; that span reads KGW. K884 is covalently cross-linked (Glycyl lysine isopeptide (Lys-Gly) (interchain with G-Cter in ubiquitin)). The tract at residues 885-1174 is disordered; it reads EGYESDVPTS…KNLSGPTKRQ (290 aa). Positions 913 to 924 are enriched in acidic residues; it reads EDPEESNDDSSD. The span at 950-966 shows a compositional bias: basic and acidic residues; the sequence is GQKENELSEMTSKDSRP. S1042 carries the phosphoserine modification. Residues 1048–1066 are compositionally biased toward basic and acidic residues; sequence FKDEGDNKQPKKEDPENRN. K1049 is covalently cross-linked (Glycyl lysine isopeptide (Lys-Gly) (interchain with G-Cter in SUMO2); alternate). A Glycyl lysine isopeptide (Lys-Gly) (interchain with G-Cter in SUMO1); alternate cross-link involves residue K1049. Residues K1055 and K1085 each participate in a glycyl lysine isopeptide (Lys-Gly) (interchain with G-Cter in SUMO2) cross-link. Residues 1097-1112 are compositionally biased toward polar residues; it reads SVLQSQRVVTSTQSNP. The segment covering 1116 to 1131 has biased composition (low complexity); the sequence is LTLSSSTESEGESGTS. The segment covering 1137–1156 has biased composition (polar residues); the sequence is GHTSATAVDSDDIQTISSGS. Residue K1165 forms a Glycyl lysine isopeptide (Lys-Gly) (interchain with G-Cter in SUMO2) linkage. 2 positions are modified to N6,N6,N6-trimethyllysine; alternate: K1186 and K1194. 2 positions are modified to N6,N6-dimethyllysine; alternate: K1186 and K1194. S-adenosyl-L-methionine contacts are provided by residues R1236 and 1239–1240; that span reads NH. Zn(2+) is bound by residues C1242, C1295, C1297, and C1302. The 17-residue stretch at 1291-1307 folds into the Post-SET domain; that stretch reads KELLCCCGAIECRGRLL.

This sequence belongs to the class V-like SAM-binding methyltransferase superfamily. Histone-lysine methyltransferase family. Suvar3-9 subfamily. Part of a complex containing at least CDYL, REST, WIZ, SETDB1, EHMT1 and EHMT2. Forms a complex with ATRX, TRIM28 and ZNF274. Probably part of a corepressor complex containing ZNF304, TRIM28, SETDB1 and DNMT1. Interacts with TRIM28/TIF1B. Interacts with ATF7IP and ATF7IP2; the interaction with ATF7IP is required to stimulate histone methyltransferase activity and facilitate the conversion of dimethylated to trimethylated H3 'Lys-9'. Interacts with MBD1; interaction is abolished when MBD1 is sumoylated. Interacts with CBX1 and CBX5. Interacts with DNMT3A and DNMT3B. Interacts with SUMO2. Interacts with MPHOSPH8. Interacts with ERG. Interacts with HDAC1, HDAC2, SIN3A, SIN3B. Interacts with ATRX. Interacts with RESF1. Interacts with ZNF638. Interacts with TASOR. Interacts with ZNF263; recruited to the SIX3 promoter along with other proteins involved in chromatin modification and transcriptional corepression where it contributes to transcriptional repression. Interacts with PHF13; the interaction probably enhances SETDB1 chromatin-associated levels and activity. Interacts with VRK1. In terms of processing, degraded by the proteasome, shielded by interaction with ATF7IP. Monoubiquitinated at Lys-884 by E2 enzymes UBE2E family. The conjugated-Ub is protected from deubiquitination through the SET domain. Monoubiquitination at Lys-884 is required for catalytic activity and H3K9 methylation and endogenous retrovirus silencing. As to expression, ubiquitously expressed. Strong expression in liver and testis. Expressed in the brain, lungs, kidneys, uterus and seminal vesicles.

The protein resides in the nucleus. It localises to the chromosome. It catalyses the reaction N(6),N(6)-dimethyl-L-lysyl(9)-[histone H3] + S-adenosyl-L-methionine = N(6),N(6),N(6)-trimethyl-L-lysyl(9)-[histone H3] + S-adenosyl-L-homocysteine + H(+). Histone methyltransferase that specifically trimethylates 'Lys-9' of histone H3. H3 'Lys-9' trimethylation represents a specific tag for epigenetic transcriptional repression by recruiting HP1 (CBX1, CBX3 and/or CBX5) proteins to methylated histones. Mainly functions in euchromatin regions, thereby playing a central role in the silencing of euchromatic genes. H3 'Lys-9' trimethylation is coordinated with DNA methylation. Probably forms a complex with MBD1 and ATF7IP that represses transcription and couples DNA methylation and histone 'Lys-9' trimethylation. Its activity is dependent on MBD1 and is heritably maintained through DNA replication by being recruited by CAF-1. SETDB1 is targeted to histone H3 by TRIM28/TIF1B, a factor recruited by KRAB zinc-finger proteins. Probably forms a corepressor complex required for activated KRAS-mediated promoter hypermethylation and transcriptional silencing of tumor suppressor genes (TSGs) or other tumor-related genes in colorectal cancer (CRC) cells. Required to maintain a transcriptionally repressive state of genes in undifferentiated embryonic stem cells (ESCs). In ESCs, in collaboration with TRIM28, is also required for H3K9me3 and silencing of endogenous and introduced retroviruses in a DNA-methylation independent-pathway. Associates at promoter regions of tumor suppressor genes (TSGs) leading to their gene silencing. The SETDB1-TRIM28-ZNF274 complex may play a role in recruiting ATRX to the 3'-exons of zinc-finger coding genes with atypical chromatin signatures to establish or maintain/protect H3K9me3 at these transcriptionally active regions. The chain is Histone-lysine N-methyltransferase SETDB1 from Mus musculus (Mouse).